The following is a 196-amino-acid chain: Ribosome maturation factor RimP (196 aa).

Residues 164 to 196 (LAPQKPNKPGPKKPGHEKKKPSNESAAGKPRAE) form a disordered region. Positions 173–182 (GPKKPGHEKK) are enriched in basic residues.

Belongs to the RimP family.

It is found in the cytoplasm. Its function is as follows. Required for maturation of 30S ribosomal subunits. This chain is Ribosome maturation factor RimP, found in Xanthomonas euvesicatoria pv. vesicatoria (strain 85-10) (Xanthomonas campestris pv. vesicatoria).